A 70-amino-acid chain; its full sequence is Large ribosomal subunit protein bL31 (70 aa).

Residues Cys-16, Cys-18, Cys-37, and Cys-40 each contribute to the Zn(2+) site.

The protein belongs to the bacterial ribosomal protein bL31 family. Type A subfamily. In terms of assembly, part of the 50S ribosomal subunit. The cofactor is Zn(2+).

In terms of biological role, binds the 23S rRNA. The sequence is that of Large ribosomal subunit protein bL31 from Proteus mirabilis (strain HI4320).